A 551-amino-acid chain; its full sequence is MKTDIEIAREAKLEKITKIAEKIDISEEYVEPYGKYIAKVDLKIWEKVKNNKDGKLILVTAMTPTPAGEGKTTTSIGLSMALNRLGKKSIVTLREPSLGPVFGIKGGAAGGGYSQVLPMENINLHFTGDIHAVSAAHNLISAVIDAHIKFGNELGIDPTRIYWKRTIDMNDRALRNIVVGLGGSANGQPREDGFIITAASEIMAILCLAKDLKDLKERLSNIVVAQSYDKKLIKVKDLKIEGALAVLLKDAIKPNLVQTIENTPAFVHGGPFANIAHGTNSIIATKLALKLSDYVVTEAGFAADLGAEKFLDFVSPTAGYDVNAVVVVATIKALKYHGGVKKDELDNENVEAMLKGMENLRVHVENLKKYNVPVIVALNVFGSDTQRELDEFSKNCEIPHALVYAFEKGGEGAVDLANLVLENIKESQYKPLITSEMSLEEKIETLAKEIYRAGNVIYTDKAKSKLKFLRKHGYDTLPVIVAKTQSSISDDPKKINAPSGYTFTIRDFELSAGAGFIVALAGDIMRMPGLSKIPNAVNIDIDEEGNIIGLS.

ATP is bound at residue 65 to 72; it reads TPAGEGKT.

Belongs to the formate--tetrahydrofolate ligase family.

It carries out the reaction (6S)-5,6,7,8-tetrahydrofolate + formate + ATP = (6R)-10-formyltetrahydrofolate + ADP + phosphate. The protein operates within one-carbon metabolism; tetrahydrofolate interconversion. In Thermosipho africanus (strain TCF52B), this protein is Formate--tetrahydrofolate ligase.